The primary structure comprises 243 residues: Ribonuclease PH (243 aa).

Phosphate-binding positions include Arg-91 and 129-131 (GTR).

This sequence belongs to the RNase PH family. As to quaternary structure, homohexameric ring arranged as a trimer of dimers.

The catalysed reaction is tRNA(n+1) + phosphate = tRNA(n) + a ribonucleoside 5'-diphosphate. Functionally, phosphorolytic 3'-5' exoribonuclease that plays an important role in tRNA 3'-end maturation. Removes nucleotide residues following the 3'-CCA terminus of tRNAs; can also add nucleotides to the ends of RNA molecules by using nucleoside diphosphates as substrates, but this may not be physiologically important. Probably plays a role in initiation of 16S rRNA degradation (leading to ribosome degradation) during starvation. In Burkholderia thailandensis (strain ATCC 700388 / DSM 13276 / CCUG 48851 / CIP 106301 / E264), this protein is Ribonuclease PH.